Consider the following 141-residue polypeptide: MAIERTLSIIKPDAVAKNVIGKIYQRFEDAGLKIIAAKMVHLSEQEAGQFYAVHKERPFYKDLVSFMTSGPVMIQCLEGENAIAKNRELMGATDPKKADAGTIRADFADSIDANAVHGSDAPETAAVEVAFFFPGMNVYSR.

The ATP site is built by Lys-11, Phe-59, Arg-87, Thr-93, Arg-104, and Asn-114. Catalysis depends on His-117, which acts as the Pros-phosphohistidine intermediate.

It belongs to the NDK family. Homotetramer. Requires Mg(2+) as cofactor.

The protein localises to the cytoplasm. It carries out the reaction a 2'-deoxyribonucleoside 5'-diphosphate + ATP = a 2'-deoxyribonucleoside 5'-triphosphate + ADP. The enzyme catalyses a ribonucleoside 5'-diphosphate + ATP = a ribonucleoside 5'-triphosphate + ADP. Its function is as follows. Major role in the synthesis of nucleoside triphosphates other than ATP. The ATP gamma phosphate is transferred to the NDP beta phosphate via a ping-pong mechanism, using a phosphorylated active-site intermediate. The polypeptide is Nucleoside diphosphate kinase (Azoarcus sp. (strain BH72)).